Here is a 342-residue protein sequence, read N- to C-terminus: Ferredoxin--NADP reductase (342 aa).

Positions 17, 36, 44, 49, 89, 124, 289, and 330 each coordinate FAD.

This sequence belongs to the ferredoxin--NADP reductase type 2 family. In terms of assembly, homodimer. It depends on FAD as a cofactor.

It carries out the reaction 2 reduced [2Fe-2S]-[ferredoxin] + NADP(+) + H(+) = 2 oxidized [2Fe-2S]-[ferredoxin] + NADPH. The chain is Ferredoxin--NADP reductase from Rhodopseudomonas palustris (strain BisA53).